The sequence spans 1138 residues: Envelopment polyprotein (1138 aa).

Positions Met1 to Ala18 are cleaved as a signal peptide. The Lumenal portion of the chain corresponds to Met19–Thr487. Intrachain disulfides connect Cys30-Cys155, Cys64-Cys161, Cys113-Cys132, Cys137-Cys142, Cys179-Cys189, Cys214-Cys250, Cys239-Cys354, Cys379-Cys438, Cys383-Cys392, Cys408-Cys427, and Cys455-Cys478. The N-linked (GlcNAc...) asparagine; by host glycan is linked to Asn138. N-linked (GlcNAc...) asparagine; by host glycosylation is present at Asn350. Asn402 is a glycosylation site (N-linked (GlcNAc...) asparagine; by host). A helical transmembrane segment spans residues Val488 to Ile508. Residues Leu509–Cys630 lie on the Cytoplasmic side of the membrane. Residues Cys519 to Lys536 are binding to the ribonucleoprotein. 2 consecutive CCHC-type zinc fingers follow at residues Cys548 to Cys568 and Cys573 to Cys594. 3 binding to the ribonucleoprotein regions span residues Tyr591 to Leu608, Lys595 to Lys606, and Lys614 to Ser628. The interval Lys610–Cys637 is interaction with host TRAF3. One can recognise an ITAM domain in the interval Lys614 to Cys637. 2 positions are modified to phosphotyrosine: Tyr618 and Tyr631. The short motif at Tyr618–Leu621 is the YxxL element. Residues Tyr631 to Ala651 traverse the membrane as a helical segment. The Lumenal segment spans residues Glu652–Asn1107. 8 disulfide bridges follow: Cys738–Cys773, Cys742–Cys780, Cys754–Cys887, Cys768–Cys898, Cys783–Cys906, Cys809–Cys818, Cys826–Cys835, and Cys866–Cys870. The segment at Tyr760–Cys780 is fusion loop. Asn930 is a glycosylation site (N-linked (GlcNAc...) asparagine; by host). 5 disulfides stabilise this stretch: Cys972–Cys1002, Cys995–Cys1047, Cys1012–Cys1017, Cys1048–Cys1053, and Cys1087–Cys1091. Residues Trp1108–Leu1128 traverse the membrane as a helical segment. Residues Met1124 to Val1138 form a binding to the ribonucleoprotein region. The Cytoplasmic portion of the chain corresponds to Cys1129 to Val1138.

The protein belongs to the hantavirus envelope glycoprotein family. Homodimer. Homotetramer; forms heterotetrameric Gn-Gc spikes in the pre-fusion conformation. Interacts (via C-terminus) with the nucleoprotein. Interacts with host TUFM; this interaction contributes to the virus-induced degradation of mitochondria by autophagy, which leads to degradation of host MAVS and inhibition of type I interferon (IFN) responses. Interacts with host MAP1LC3B; this interaction contributes to the virus-induced degradation of mitochondria by autophagy, which leads to degradation of host MAVS and inhibition of type I interferon (IFN) responses. Interacts (via C-terminus) with host TRAF3; this interaction inhibits the formation of TRAF3-TBK1 complexes. As to quaternary structure, homodimer. Homotetramer; forms heterotetrameric Gn-Gc spikes in the pre-fusion conformation. Homotrimer; forms homotrimer in the post-fusion conformation at acidic pH. Interacts (via C-terminus) with the nucleoprotein. In terms of processing, envelope polyprotein precursor is quickly cleaved in vivo just after synthesis, presumably by host signal peptidase.

Its subcellular location is the virion membrane. It is found in the host cell surface. The protein localises to the host Golgi apparatus membrane. The protein resides in the host endoplasmic reticulum membrane. It localises to the host mitochondrion. Functionally, forms homotetramers with glycoprotein C at the surface of the virion. Attaches the virion to host cell receptors including integrin ITGAV/ITGB3. This attachment induces virion internalization possibly through clathrin-dependent endocytosis and dynamin-independent macropinocytosis. Mediates the assembly and budding of infectious virus particles through its interaction with the nucleocapsid protein and the viral genome. May dysregulate normal immune and endothelial cell responses through an ITAM motif. Translocates to mitochondria, binds to host TUFM and recruits MAP1LC3B. These interactions induce mitochondrial autophagy and therefore destruction of host MAVS leading to inhibition of type I interferon (IFN) responses. Concomitant breakdown of glycoprotein N is apparently prevented by the nucleoprotein that may inhibit Gn-stimulated autophagosome-lysosome fusion. Interacts with the viral genomic RNA. Inhibits the host RIG-I/TBK1 pathway by disrupting the formation of TBK1-TRAF3 complexes and downstream signaling responses required for IFN-beta transcription. In terms of biological role, forms homotetramers with glycoprotein N at the surface of the virion. Attaches the virion to host cell receptors including integrin ITGAV/ITGB3. This attachment induces virion internalization predominantly through clathrin-dependent endocytosis. Class II fusion protein that promotes fusion of viral membrane with host endosomal membrane after endocytosis of the virion. This Abrothrix longipilis (Long-haired grass mouse) protein is Envelopment polyprotein (GP).